We begin with the raw amino-acid sequence, 616 residues long: MSWGTELWDQFDNLEKHTQWGIDILEKYIKFVKERTEIELSYAKQLRNLSKKYQPKKNSKEEEEYKYTACKAFLSTLNEMNDYAGQHEVISENMTSQITVDLMRYVQELKQERKSNFHDGRKAQQHIETCWKQLESSKRRFERDCKEADRAQQYFEKMDADINVTKADVEKARQQAQIRQQMAEDSKADYSLILQRFNQEQWEYYHTHIPNIFQKIQEMEERRIVRIGESMKTYAEVDRQVIPIIGKCLDGIVKAAESIDQKNDSQLVVEAYKSGFEPPGDIEFEDYTQPMKRTVSDNSLSSSKEGKPELRFGGKSRGKLWPFIKKNKLMSLLTSPHQPPPPPPASASPSAVPNGPQSPKQPKEPLSHRFNEFMTSKPKIHCFRSLKRGLSLKLGVTPEDFSNFPPEQRRKKLQQKVDDLNREIQKETDQRDAITKMKDVYLKNPQMGDPASLDQKLTEVTQNIEKLRLEAQKFEAWLAEVEGRLPARSEQARRQSGLYDGQTHQTVTNCAQDRESPDGSYTEEQSQESEHKVLAPDFDDEFDDEEPLPAIGTCKALYTFEGQNEGTISVVEGETLSVIEEDKGDGWTRIRRNEDEEGYVPTSYVEVYLDKNAKGS.

The required for self-association and induction of membrane tubulation stretch occupies residues 1–79 (MSWGTELWDQ…CKAFLSTLNE (79 aa)). Residues 1–264 (MSWGTELWDQ…AAESIDQKND (264 aa)) enclose the F-BAR domain. Residues 1–334 (MSWGTELWDQ…KKNKLMSLLT (334 aa)) are interaction with microtubules. N6-acetyllysine is present on residues Lys66 and Lys110. Residues 67–259 (YTACKAFLST…DGIVKAAESI (193 aa)) adopt a coiled-coil conformation. The tract at residues 251-616 (GIVKAAESID…VYLDKNAKGS (366 aa)) is required for self-association and induction of membrane tubulation. Disordered stretches follow at residues 280 to 314 (GDIE…RFGG) and 332 to 366 (LLTS…KEPL). Residues Ser296 and Ser299 each carry the phosphoserine modification. Over residues 337-346 (HQPPPPPPAS) the composition is skewed to pro residues. Phosphoserine occurs at positions 348 and 358. Residues 398-490 (PEDFSNFPPE…VEGRLPARSE (93 aa)) adopt a coiled-coil conformation. Positions 399-551 (EDFSNFPPEQ…FDDEEPLPAI (153 aa)) are interaction with RND2. Residues 403-480 (NFPPEQRRKK…AQKFEAWLAE (78 aa)) enclose the REM-1 domain. Positions 487-531 (ARSEQARRQSGLYDGQTHQTVTNCAQDRESPDGSYTEEQSQESEH) are disordered. Residues 494 to 616 (RQSGLYDGQT…VYLDKNAKGS (123 aa)) form an interaction with PDE6G region. Ser496 carries the post-translational modification Phosphoserine. The residue at position 499 (Tyr499) is a Phosphotyrosine. The segment covering 502 to 511 (QTHQTVTNCA) has biased composition (polar residues). A required for interaction with TNKS region spans residues 513 to 616 (DRESPDGSYT…VYLDKNAKGS (104 aa)). Ser520 is subject to Phosphoserine. An interaction with DNM1 and DNM3 region spans residues 534-616 (LAPDFDDEFD…VYLDKNAKGS (83 aa)). In terms of domain architecture, SH3 spans 549–610 (PAIGTCKALY…PTSYVEVYLD (62 aa)). An interaction with ARHGAP17, DAAM1, DIAPH1 and DIAPH2 region spans residues 549 to 616 (PAIGTCKALY…VYLDKNAKGS (68 aa)). The interaction with DNM2 and WASL stretch occupies residues 552–608 (GTCKALYTFEGQNEGTISVVEGETLSVIEEDKGDGWTRIRRNEDEEGYVPTSYVEVY). Positions 552–609 (GTCKALYTFEGQNEGTISVVEGETLSVIEEDKGDGWTRIRRNEDEEGYVPTSYVEVYL) are interaction with FASLG.

This sequence belongs to the FNBP1 family. Homodimerizes, the dimers can polymerize end-to-end to form filamentous structures. Interacts specifically with GTP-bound RND2 and CDC42. Interacts with AKAP9, ARHGAP17, DAAM1, DIAPH1, DIAPH2, DNM1, DNM2, DNM3, FASLG/FASL, microtubules, PDE6G, SNX2 and WASL/N-WASP. May interact with TNKS. Expressed in brain and testis.

The protein resides in the cytoplasm. It is found in the cytoskeleton. The protein localises to the cell cortex. Its subcellular location is the lysosome. It localises to the cytoplasmic vesicle. The protein resides in the cell membrane. It is found in the membrane. The protein localises to the clathrin-coated pit. In terms of biological role, required to coordinate membrane tubulation with reorganization of the actin cytoskeleton during the late stage of clathrin-mediated endocytosis. Binds to lipids such as phosphatidylinositol 4,5-bisphosphate and phosphatidylserine and promotes membrane invagination and the formation of tubules. Also enhances actin polymerization via the recruitment of WASL/N-WASP, which in turn activates the Arp2/3 complex. Actin polymerization may promote the fission of membrane tubules to form endocytic vesicles. May act as a link between RND2 signaling and regulation of the actin cytoskeleton. May be required for the lysosomal retention of FASLG/FASL. This is Formin-binding protein 1 (Fnbp1) from Mus musculus (Mouse).